The sequence spans 428 residues: Enolase (428 aa).

Q162 contributes to the (2R)-2-phosphoglycerate binding site. Residue E204 is the Proton donor of the active site. 3 residues coordinate Mg(2+): D241, E282, and D309. (2R)-2-phosphoglycerate is bound by residues K334, R363, S364, and K385. K334 (proton acceptor) is an active-site residue.

Belongs to the enolase family. The cofactor is Mg(2+).

It localises to the cytoplasm. It is found in the secreted. The protein resides in the cell surface. The enzyme catalyses (2R)-2-phosphoglycerate = phosphoenolpyruvate + H2O. The protein operates within carbohydrate degradation; glycolysis; pyruvate from D-glyceraldehyde 3-phosphate: step 4/5. Functionally, catalyzes the reversible conversion of 2-phosphoglycerate (2-PG) into phosphoenolpyruvate (PEP). It is essential for the degradation of carbohydrates via glycolysis. The chain is Enolase from Mycobacterium ulcerans (strain Agy99).